A 710-amino-acid polypeptide reads, in one-letter code: MSVPSSLSQSAINANSHGGPALSLPLPLHAAHNQLLNAKLQATAVGPKDLRSAMGEGGGPEPGPANAKWLKEGQNQLRRAATAHRDQNRNVTLTLAEEASQEPEMAPLGPKGLIHLYSELELSAHNAANRGLRGPGLIISTQEQGPDEGEEKAAGEAEEEEEDDDDEEEEEDLSSPPGLPEPLESVEAPPRPQALTDGPREHSKSASLLFGMRNSAASDEDSSWATLSQGSPSYGSPEDTDSFWNPNAFETDSDLPAGWMRVQDTSGTYYWHIPTGTTQWEPPGRASPSQGSSPQEESQLTWTGFAHGEGFEDGEFWKDEPSDEAPMELGLKEPEEGTLTFPAQSLSPEPLPQEEEKLPPRNTNPGIKCFAVRSLGWVEMTEEELAPGRSSVAVNNCIRQLSYHKNNLHDPMSGGWGEGKDLLLQLEDETLKLVEPQSQALLHAQPIISIRVWGVGRDSGRERDFAYVARDKLTQMLKCHVFRCEAPAKNIATSLHEICSKIMAERRNARCLVNGLSLDHSKLVDVPFQVEFPAPKNELVQKFQVYYLGNVPVAKPVGVDVINGALESVLSSSSREQWTPSHVSVAPATLTILHQQTEAVLGECRVRFLSFLAVGRDVHTFAFIMAAGPASFCCHMFWCEPNAASLSEAVQAACMLRYQKCLDARSQASTSCLPAPPAESVARRVGWTVRRGVQSLWGSLKPKRLGAHTP.

Positions 1–15 are enriched in polar residues; it reads MSVPSSLSQSAINAN. 4 disordered regions span residues 1-24, 131-254, 276-299, and 340-365; these read MSVP…ALSL, GLRG…TDSD, GTTQ…EESQ, and TFPA…NTNP. The span at 145-173 shows a compositional bias: acidic residues; the sequence is GPDEGEEKAAGEAEEEEEDDDDEEEEEDL. Lysine 204 bears the N6-acetyllysine mark. Residues 223 to 234 show a composition bias toward polar residues; sequence SWATLSQGSPSY. Positions 253 to 285 constitute a WW domain; that stretch reads SDLPAGWMRVQDTSGTYYWHIPTGTTQWEPPGR. Positions 287 to 299 are enriched in low complexity; the sequence is SPSQGSSPQEESQ. One can recognise a PID 1 domain in the interval 370–509; that stretch reads FAVRSLGWVE…SKIMAERRNA (140 aa). A Phosphoserine; by PKC modification is found at serine 459. Serine 517 is subject to Phosphoserine. A PID 2 domain is found at 542–699; sequence KFQVYYLGNV…RRGVQSLWGS (158 aa). Tyrosine 547 carries the phosphotyrosine; by ABL1 modification. Serine 610 bears the Phosphoserine; by SGK1 mark. Lysine 701 carries the post-translational modification N6-acetyllysine.

In terms of assembly, component of a complex, at least composed of APBB1, RASD1/DEXRAS1 and APP. Interacts (via PID domain 2) with APP (with the intracellular domain of the amyloid-beta precursor protein). Interacts (via PID domain 2) with RASD1/DEXRAS1; impairs the transcription activation activity. Interacts (via PID domain 1) with KAT5/TIP60. Interacts (via the WW domain) with the proline-rich region of APBB1IP. Interacts with TSHZ1 and TSHZ2. Interacts (via the WW domain) with histone H2AX (when phosphorylated on 'Tyr-142') and the proline-rich region of ENAH. Interacts with MAPK8. Interacts (via PID domain 1) with TSHZ3 (via homeobox domain). Interacts with SET. Found in a trimeric complex with HDAC1 and TSHZ3; the interaction between HDAC1 and APBB1 is mediated by TSHZ3. Interacts (via WWW domain) with NEK6. Interacts (via WWW domain) with ABL1. Interacts with RNF157. Interacts with ARF6. In terms of processing, phosphorylation at Ser-610 by SGK1 promotes its localization to the nucleus. Phosphorylated following nuclear translocation. Phosphorylation at Tyr-547 by ABL1 enhances transcriptional activation activity and reduces the affinity for RASD1/DEXRAS1. Phosphorylated at Ser-459 by PKC upon insulin activation. Post-translationally, acetylation at Lys-204 and Lys-701 by KAT5 promotes its transcription activator activity. Polyubiquitination by RNF157 leads to degradation by the proteasome. Highly expressed in brain; strongly reduced in post-mortem elderly subjects with Alzheimer disease. As to expression, expressed preferentially in the brain.

It is found in the cell membrane. The protein localises to the cytoplasm. Its subcellular location is the nucleus. The protein resides in the cell projection. It localises to the growth cone. It is found in the nucleus speckle. Its function is as follows. Transcription coregulator that can have both coactivator and corepressor functions. Adapter protein that forms a transcriptionally active complex with the gamma-secretase-derived amyloid precursor protein (APP) intracellular domain. Plays a central role in the response to DNA damage by translocating to the nucleus and inducing apoptosis. May act by specifically recognizing and binding histone H2AX phosphorylated on 'Tyr-142' (H2AXY142ph) at double-strand breaks (DSBs), recruiting other pro-apoptosis factors such as MAPK8/JNK1. Required for histone H4 acetylation at double-strand breaks (DSBs). Its ability to specifically bind modified histones and chromatin modifying enzymes such as KAT5/TIP60, probably explains its transcription activation activity. Functions in association with TSHZ3, SET and HDAC factors as a transcriptional repressor, that inhibits the expression of CASP4. Associates with chromatin in a region surrounding the CASP4 transcriptional start site(s). Involved in hippocampal neurite branching and neuromuscular junction formation, as a result plays a role in spatial memory functioning. Plays a role in the maintenance of lens transparency. May play a role in muscle cell strength. Acts as a molecular adapter that functions in neurite outgrowth by activating the RAC1-ARF6 axis upon insulin treatment. This is Amyloid beta precursor protein binding family B member 1 from Homo sapiens (Human).